Here is a 103-residue protein sequence, read N- to C-terminus: Large ribosomal subunit protein bL21 (103 aa).

Belongs to the bacterial ribosomal protein bL21 family. As to quaternary structure, part of the 50S ribosomal subunit. Contacts protein L20.

Its function is as follows. This protein binds to 23S rRNA in the presence of protein L20. The chain is Large ribosomal subunit protein bL21 from Psychromonas ingrahamii (strain DSM 17664 / CCUG 51855 / 37).